Here is a 200-residue protein sequence, read N- to C-terminus: Ras-related protein Rab-10 (200 aa).

GTP-binding residues include S18, G19, V20, G21, K22, T23, C24, N35, T36, S40, and T41. T23 is a Mg(2+) binding site. 2 consecutive short sequence motifs (switch) follow at residues 32-46 (DAFNTTFISTIGIDF) and 64-81 (DTAGQERFHTITTSYYRG). Mg(2+) contacts are provided by T41 and D64. A GTP-binding site is contributed by G67. T73 is subject to Phosphothreonine; by LRRK2. N6-acetyllysine is present on K102. A Glycyl lysine isopeptide (Lys-Gly) (interchain with G-Cter in ubiquitin) cross-link involves residue K102. GTP-binding residues include N122, K123, D125, and M126. K136 participates in a covalent cross-link: Glycyl lysine isopeptide (Lys-Gly) (interchain with G-Cter in ubiquitin). S152, A153, and K154 together coordinate GTP. K154 participates in a covalent cross-link: Glycyl lysine isopeptide (Lys-Gly) (interchain with G-Cter in ubiquitin). Residues C199 and C200 are each lipidated (S-geranylgeranyl cysteine).

This sequence belongs to the small GTPase superfamily. Rab family. In terms of assembly, interacts with MYO5A; mediates the transport to the plasma membrane of SLC2A4/GLUT4 storage vesicles. Interacts with GDI1 and with GDI2; negatively regulates RAB10 association with membranes and activation. Interacts (GDP-bound form) with LLGL1; the interaction is direct and promotes RAB10 association with membranes and activation through competition with the Rab inhibitor GDI1. Interacts with EXOC4; probably associates with the exocyst. Interacts (GTP-bound form) with MICALCL, MICAL1, MICAL3, EHBP1 and EHBP1L1; at least in case of MICAL1 two molecules of RAB10 can bind to one molecule of MICAL1. Interacts with TBC1D13. Interacts with SEC16A. Interacts with CHM and CHML. Interacts with LRRK2; interaction facilitates phosphorylation of Thr-73. Interacts (when phosphorylated on Thr-73) with RILPL1 and RILPL2. Interacts with TBC1D21. Interacts with MARCKS. It depends on Mg(2+) as a cofactor. Ubiquitinated upon Legionella pneumophila infection. Ubiquitination does not lead to proteasomal degradation. In terms of processing, phosphorylation of Thr-73 in the switch II region by LRRK2 prevents the association of dRAB regulatory proteins, including CHM, CHML and RAB GDP dissociation inhibitors GDI1 and GDI2. Phosphorylation of Thr-73 by LRRK2 is stimulated by RAB29 and RAB32. Phosphorylation by LRRK2 is required for localization to stressed lysosomes. As to expression, expressed in the hippocampus. Expressed in neutrophils (at protein level). Expressed in the testis (at protein level).

Its subcellular location is the cytoplasmic vesicle membrane. The protein localises to the golgi apparatus membrane. The protein resides in the golgi apparatus. It is found in the trans-Golgi network membrane. It localises to the endosome membrane. Its subcellular location is the recycling endosome membrane. The protein localises to the cytoplasmic vesicle. The protein resides in the phagosome membrane. It is found in the cytoplasm. It localises to the cytoskeleton. Its subcellular location is the cilium basal body. The protein localises to the endoplasmic reticulum membrane. The protein resides in the perinuclear region. It is found in the lysosome. The enzyme catalyses GTP + H2O = GDP + phosphate + H(+). Its activity is regulated as follows. Regulated by guanine nucleotide exchange factors (GEFs) DENND4C and RABIF which promote the exchange of bound GDP for free GTP. Regulated by GTPase activating proteins (GAPs) including TBC1D21 which increase the GTP hydrolysis activity. Inhibited by GDP dissociation inhibitors GDI1 and GDI2 which prevent Rab-GDP dissociation. Its function is as follows. The small GTPases Rab are key regulators of intracellular membrane trafficking, from the formation of transport vesicles to their fusion with membranes. Rabs cycle between an inactive GDP-bound form and an active GTP-bound form that is able to recruit to membranes different set of downstream effectors directly responsible for vesicle formation, movement, tethering and fusion. That Rab is mainly involved in the biosynthetic transport of proteins from the Golgi to the plasma membrane. Regulates, for instance, SLC2A4/GLUT4 glucose transporter-enriched vesicles delivery to the plasma membrane. In parallel, it regulates the transport of TLR4, a toll-like receptor to the plasma membrane and therefore may be important for innate immune response. Also plays a specific role in asymmetric protein transport to the plasma membrane. In neurons, it is involved in axonogenesis through regulation of vesicular membrane trafficking toward the axonal plasma membrane. In epithelial cells, it regulates transport from the Golgi to the basolateral membrane. May play a role in the basolateral recycling pathway and in phagosome maturation. May play a role in endoplasmic reticulum dynamics and morphology controlling tubulation along microtubules and tubules fusion. Together with LRRK2, RAB8A, and RILPL1, it regulates ciliogenesis. When phosphorylated by LRRK2 on Thr-73, binds RILPL1 and inhibits ciliogenesis. Participates in the export of a subset of neosynthesized proteins through a Rab8-Rab10-Rab11-dependent endososomal export route. Targeted to and stabilized on stressed lysosomes through LRRK2 phosphorylation where it promotes the extracellular release of lysosomal content through EHBP1 and EHNP1L1 effector proteins. In terms of biological role, (Microbial infection) Upon Legionella pneumophila infection promotes endoplasmic reticulum recruitment and bacterial replication. Plays a role in remodeling the Legionella-containing vacuole (LCV) into an endoplasmic reticulum-like vacuole. In Homo sapiens (Human), this protein is Ras-related protein Rab-10.